Reading from the N-terminus, the 250-residue chain is 3-deoxy-manno-octulosonate cytidylyltransferase (250 aa).

This sequence belongs to the KdsB family.

It localises to the cytoplasm. It catalyses the reaction 3-deoxy-alpha-D-manno-oct-2-ulosonate + CTP = CMP-3-deoxy-beta-D-manno-octulosonate + diphosphate. The protein operates within nucleotide-sugar biosynthesis; CMP-3-deoxy-D-manno-octulosonate biosynthesis; CMP-3-deoxy-D-manno-octulosonate from 3-deoxy-D-manno-octulosonate and CTP: step 1/1. It functions in the pathway bacterial outer membrane biogenesis; lipopolysaccharide biosynthesis. Activates KDO (a required 8-carbon sugar) for incorporation into bacterial lipopolysaccharide in Gram-negative bacteria. This Sinorhizobium medicae (strain WSM419) (Ensifer medicae) protein is 3-deoxy-manno-octulosonate cytidylyltransferase.